A 695-amino-acid polypeptide reads, in one-letter code: L-type lectin-domain containing receptor kinase S.7 (695 aa).

The first 23 residues, 1–23, serve as a signal peptide directing secretion; it reads MPPRCRRLPLLFILLLAVRPLSA. At 24–331 the chain is on the extracellular side; the sequence is AAASSIAAAP…NHRRRHLFYK (308 aa). The tract at residues 37–276 is legume-lectin like; the sequence is YRRISWASNL…VERWTFRTFG (240 aa). 2 N-linked (GlcNAc...) asparagine glycosylation sites follow: Asn45 and Asn279. Residues 286 to 320 show a composition bias toward pro residues; sequence PTKYIGPMPPNNQPLPPPPSPSPSPPPPSPPPPPH. The interval 286–323 is disordered; the sequence is PTKYIGPMPPNNQPLPPPPSPSPSPPPPSPPPPPHPNH. A helical membrane pass occupies residues 332–352; it reads VLGGVLGGMVLLGLVVVGSAV. Topologically, residues 353 to 695 are cytoplasmic; it reads LLGRSVRRKN…TANTAFFSCR (343 aa). At Thr376 the chain carries Phosphothreonine. Ser378 carries the phosphoserine modification. A phosphothreonine mark is found at Thr386 and Thr403. The Protein kinase domain occupies 389–661; it reads FDSGNVIGVG…SMLDGTAPLI (273 aa). ATP contacts are provided by residues 395 to 403 and Lys418; that span reads IGVGGSGAT. The active-site Proton acceptor is the Asp514. Phosphothreonine is present on Thr657.

This sequence in the N-terminal section; belongs to the leguminous lectin family. The protein in the C-terminal section; belongs to the protein kinase superfamily. Ser/Thr protein kinase family. Interacts with INP1. Interaction with INP1 is required for DAF1 polar localization at the future aperture sites in tetrads. Post-translationally, autophosphorylated at Thr-376; Ser-378; Thr-386; Thr-403 and Thr-657. As to expression, expressed in roots, leaves, lemma, palea, pistil and anthers.

The protein resides in the cell membrane. It is found in the cytoplasm. The protein localises to the cytosol. The catalysed reaction is L-seryl-[protein] + ATP = O-phospho-L-seryl-[protein] + ADP + H(+). It catalyses the reaction L-threonyl-[protein] + ATP = O-phospho-L-threonyl-[protein] + ADP + H(+). Legume-lectin receptor-like kinase required for normal pollen development and male fertility. Regulates pollen exine assembly and aperture development. Plays a critical role in annulus formation, and may participate in the formation of the fibrillar-granular layer underneath the operculum. May function by regulating the expression of genes involved in pollen exine development. Kinase activity is required for its function in pollen development. The sequence is that of L-type lectin-domain containing receptor kinase S.7 from Oryza sativa subsp. japonica (Rice).